The sequence spans 268 residues: Type III pantothenate kinase 1 (268 aa).

Residue 6 to 13 coordinates ATP; the sequence is DIGNTNIT. Substrate contacts are provided by residues tyrosine 100 and 107–110; that span reads GTDR. Catalysis depends on aspartate 109, which acts as the Proton acceptor. Aspartate 133 contributes to the K(+) binding site. Position 136 (threonine 136) interacts with ATP.

It belongs to the type III pantothenate kinase family. Homodimer. The cofactor is NH4(+). K(+) serves as cofactor.

The protein localises to the cytoplasm. It carries out the reaction (R)-pantothenate + ATP = (R)-4'-phosphopantothenate + ADP + H(+). Its pathway is cofactor biosynthesis; coenzyme A biosynthesis; CoA from (R)-pantothenate: step 1/5. Catalyzes the phosphorylation of pantothenate (Pan), the first step in CoA biosynthesis. In Symbiobacterium thermophilum (strain DSM 24528 / JCM 14929 / IAM 14863 / T), this protein is Type III pantothenate kinase 1.